The chain runs to 298 residues: MAKKDEHLRKPEWLKIKLNTNENYTGLKKLMRENNLHTVCEEAKCPNIHECWAVRRTATFMILGSVCTRACRFCAVKTGLPTELDLQEPERVADSVALMNLKHAVITAVARDDQKDGGAGIFAETVRAIRRKSPFTTIEVLPSDMGGNYDNLKTLMDTRPDILNHNIETVRRLTPRVRARATYDRSLEFLRRAKEMQPDIPTKSSIMIGLGETKEEIIEVMDDLLANNVDIMAIGQYLQPTKKHLKVQKYYHPDEFAELKEIAMQKGFSHCEAGPLVRSSYHADEQVNEASKKRQAQA.

Residues C40, C45, C51, C67, C71, C74, and S280 each coordinate [4Fe-4S] cluster. One can recognise a Radical SAM core domain in the interval 53 to 269; sequence AVRRTATFMI…KEIAMQKGFS (217 aa).

Belongs to the radical SAM superfamily. Lipoyl synthase family. Requires [4Fe-4S] cluster as cofactor.

Its subcellular location is the cytoplasm. The enzyme catalyses [[Fe-S] cluster scaffold protein carrying a second [4Fe-4S](2+) cluster] + N(6)-octanoyl-L-lysyl-[protein] + 2 oxidized [2Fe-2S]-[ferredoxin] + 2 S-adenosyl-L-methionine + 4 H(+) = [[Fe-S] cluster scaffold protein] + N(6)-[(R)-dihydrolipoyl]-L-lysyl-[protein] + 4 Fe(3+) + 2 hydrogen sulfide + 2 5'-deoxyadenosine + 2 L-methionine + 2 reduced [2Fe-2S]-[ferredoxin]. The protein operates within protein modification; protein lipoylation via endogenous pathway; protein N(6)-(lipoyl)lysine from octanoyl-[acyl-carrier-protein]. Its function is as follows. Catalyzes the radical-mediated insertion of two sulfur atoms into the C-6 and C-8 positions of the octanoyl moiety bound to the lipoyl domains of lipoate-dependent enzymes, thereby converting the octanoylated domains into lipoylated derivatives. In Bacillus subtilis (strain 168), this protein is Lipoyl synthase.